Here is a 339-residue protein sequence, read N- to C-terminus: tRNA N6-adenosine threonylcarbamoyltransferase (339 aa).

Fe cation contacts are provided by His-114 and His-118. Residues 137-141, Asp-170, Gly-183, Asp-187, and Asn-277 contribute to the substrate site; that span reads VVSGG. Asp-305 contributes to the Fe cation binding site.

Belongs to the KAE1 / TsaD family. Requires Fe(2+) as cofactor.

The protein localises to the cytoplasm. The enzyme catalyses L-threonylcarbamoyladenylate + adenosine(37) in tRNA = N(6)-L-threonylcarbamoyladenosine(37) in tRNA + AMP + H(+). In terms of biological role, required for the formation of a threonylcarbamoyl group on adenosine at position 37 (t(6)A37) in tRNAs that read codons beginning with adenine. Is involved in the transfer of the threonylcarbamoyl moiety of threonylcarbamoyl-AMP (TC-AMP) to the N6 group of A37, together with TsaE and TsaB. TsaD likely plays a direct catalytic role in this reaction. This chain is tRNA N6-adenosine threonylcarbamoyltransferase, found in Clostridium perfringens (strain ATCC 13124 / DSM 756 / JCM 1290 / NCIMB 6125 / NCTC 8237 / Type A).